We begin with the raw amino-acid sequence, 375 residues long: DNA replication and repair protein RecF (375 aa).

30 to 37 (GENAQGKT) is an ATP binding site.

It belongs to the RecF family.

The protein resides in the cytoplasm. In terms of biological role, the RecF protein is involved in DNA metabolism; it is required for DNA replication and normal SOS inducibility. RecF binds preferentially to single-stranded, linear DNA. It also seems to bind ATP. This chain is DNA replication and repair protein RecF, found in Enterococcus faecalis (strain ATCC 700802 / V583).